The chain runs to 353 residues: Tetrahedral aminopeptidase (353 aa).

Zn(2+)-binding residues include His68 and Asp182. Residue Glu212 is the Proton acceptor of the active site. Positions 213, 235, and 323 each coordinate Zn(2+).

This sequence belongs to the peptidase M42 family. As to quaternary structure, homododecamer. The assembly of six dimers results in a tetrahedral-shaped structure; all 12 active sites are located on the inside of the tetrahedron. Substrate access is granted by four pores with a maximal diameter of 18 Angstroms, allowing only small peptides and unfolded proteins access to the active site. Beside the four entry ports, TET contains 12 small product release openings, which are large enough to allow passage of only single amino acid residues. Zn(2+) serves as cofactor. Co(2+) is required as a cofactor.

Its activity is regulated as follows. Inhibited by EDTA and bestatin in vitro. Is insensitive to papain, antipain, chymostatin, leupeptin, pepstatin and aprotinin. Functionally, functions as an aminopeptidase, with a clear preference for leucine as the N-terminal amino acid. However, can also cleave moderately long polypeptide substrates of various compositions in a fairly unspecific manner. Has neither carboxypeptidase nor endoproteolytic activities, and it is devoid of N-terminal deblocking activity. Is involved in protein degradation, performing degradation of oligopeptides produced by the proteasome into single amino acids. The protein is Tetrahedral aminopeptidase (frvX) of Pyrococcus horikoshii (strain ATCC 700860 / DSM 12428 / JCM 9974 / NBRC 100139 / OT-3).